The following is a 341-amino-acid chain: Phenylalanine--tRNA ligase alpha subunit (341 aa).

Glutamate 254 is a binding site for Mg(2+).

This sequence belongs to the class-II aminoacyl-tRNA synthetase family. Phe-tRNA synthetase alpha subunit type 1 subfamily. As to quaternary structure, tetramer of two alpha and two beta subunits. Mg(2+) is required as a cofactor.

The protein resides in the cytoplasm. The catalysed reaction is tRNA(Phe) + L-phenylalanine + ATP = L-phenylalanyl-tRNA(Phe) + AMP + diphosphate + H(+). In Mycoplasma pneumoniae (strain ATCC 29342 / M129 / Subtype 1) (Mycoplasmoides pneumoniae), this protein is Phenylalanine--tRNA ligase alpha subunit (pheS).